We begin with the raw amino-acid sequence, 207 residues long: Interferon kappa (207 aa).

The N-terminal stretch at 1 to 27 (MSTKPDMIQKCLWLEILMGIFIAGTLS) is a signal peptide. 2 disulfide bridges follow: cysteine 30–cysteine 128 and cysteine 59–cysteine 181. The stretch at 118-148 (LDQQAEYLNQCLEEDKNENEDMKEMKENEMK) forms a coiled coil.

It belongs to the alpha/beta interferon family. As to expression, expressed in keratinocytes, monocytes and in resting dendritic cells.

The protein resides in the secreted. May play a role in the regulation of immune cell function. Cytokine that imparts cellular protection against viral infection in a species-specific manner. Activates the interferon-stimulated response element signaling pathway. It is able to directly modulate cytokine release from monocytes and dendritic cells. Binds heparin. This is Interferon kappa (IFNK) from Homo sapiens (Human).